Consider the following 497-residue polypeptide: Probable cytosol aminopeptidase (497 aa).

Residues K263 and D268 each contribute to the Mn(2+) site. K275 is an active-site residue. Mn(2+) is bound by residues D286, D345, and E347. Residue R349 is part of the active site.

This sequence belongs to the peptidase M17 family. It depends on Mn(2+) as a cofactor.

The protein localises to the cytoplasm. It carries out the reaction Release of an N-terminal amino acid, Xaa-|-Yaa-, in which Xaa is preferably Leu, but may be other amino acids including Pro although not Arg or Lys, and Yaa may be Pro. Amino acid amides and methyl esters are also readily hydrolyzed, but rates on arylamides are exceedingly low.. The catalysed reaction is Release of an N-terminal amino acid, preferentially leucine, but not glutamic or aspartic acids.. Functionally, presumably involved in the processing and regular turnover of intracellular proteins. Catalyzes the removal of unsubstituted N-terminal amino acids from various peptides. This is Probable cytosol aminopeptidase from Brucella suis biovar 1 (strain 1330).